We begin with the raw amino-acid sequence, 121 residues long: Large ribosomal subunit protein uL18c (121 aa).

This sequence belongs to the universal ribosomal protein uL18 family. Part of the 50S ribosomal subunit; contacts the 5S rRNA.

It localises to the plastid. The protein localises to the cyanelle. Functionally, binds 5S rRNA, forms part of the central protuberance of the 50S subunit. The chain is Large ribosomal subunit protein uL18c (rpl18) from Cyanophora paradoxa.